Here is a 307-residue protein sequence, read N- to C-terminus: Heme A synthase (307 aa).

Residues 1 to 8 (MQHNRYLK) are Cytoplasmic-facing. Residues 9–29 (WFAVAATVGMLLILLGGALVT) form a helical membrane-spanning segment. Residues 30-56 (KTDSGLGCGRNWPDCNGSLIPKEITPE) lie on the Extracellular side of the membrane. A disulfide bridge links cysteine 37 with cysteine 44. A helical transmembrane segment spans residues 57–77 (VLIEFSHRLVTGVVSISILVL). Glutamate 60 is a catalytic residue. Histidine 63 provides a ligand contact to heme o. The Cytoplasmic portion of the chain corresponds to 78-92 (TVWTWRKLGHIREVK). A helical membrane pass occupies residues 93 to 113 (LLGFLAMFFLIAQALIGAAQV). Residues 114–123 (LWGQGDFILA) are Extracellular-facing. A helical membrane pass occupies residues 124–144 (LHFGISLISFAAVLLLSMIVF). Histidine 125 is a heme o binding site. The Cytoplasmic portion of the chain corresponds to 145 to 161 (EVDRKFDADNVFIGKKL). A helical transmembrane segment spans residues 162-182 (RWHTIAVTIYSYLVVYTGALV). The Extracellular segment spans residues 183-218 (RHTDSSLICPDWPFCYNETPLASPNNMYEWVQMGHR). A disulfide bridge connects residues cysteine 191 and cysteine 197. Histidine 217 lines the heme b pocket. A helical transmembrane segment spans residues 219–239 (LAVLIIFIWIAYITWHAVKEY). Over 240–247 (KNQRVVYY) the chain is Cytoplasmic. A helical membrane pass occupies residues 248 to 268 (GWIIAFTIVFLQVIAGMLVVL). Topologically, residues 269-276 (TKLNLTVA) are extracellular. A helical membrane pass occupies residues 277 to 297 (LMHSLLISLLFGLLCYMIMLV). Histidine 279 contributes to the heme b binding site. Over 298 to 307 (ARSNYNEKMK) the chain is Cytoplasmic.

Belongs to the COX15/CtaA family. Type 1 subfamily. In terms of assembly, interacts with CtaB. The cofactor is heme b.

It localises to the cell membrane. It catalyses the reaction Fe(II)-heme o + 2 A + H2O = Fe(II)-heme a + 2 AH2. It functions in the pathway porphyrin-containing compound metabolism; heme A biosynthesis; heme A from heme O: step 1/1. Catalyzes the conversion of heme O to heme A by two successive hydroxylations of the methyl group at C8. The first hydroxylation forms heme I, the second hydroxylation results in an unstable dihydroxymethyl group, which spontaneously dehydrates, resulting in the formyl group of heme A. This chain is Heme A synthase, found in Lysinibacillus sphaericus (strain C3-41).